The following is a 151-amino-acid chain: Anti-CBASS protein Acb1 (151 aa).

A 3',3'-cGAMP-binding site is contributed by Y13. A 3',3'-cUAMP-binding site is contributed by Y13. Catalysis depends on residues H45 and T47. Residue Y108 coordinates 3',3'-cGAMP. Residue Y108 participates in 3',3'-cUAMP binding. Active-site residues include H114 and T116. E140 and W146 together coordinate 3',3'-cGAMP. 2 residues coordinate 3',3'-cUAMP: E140 and W146.

This sequence belongs to the anti-CBASS protein Acb1 family.

The catalysed reaction is 3',3'-cUAMP + H2O = U[3'-5']pAp[3'] + H(+). The enzyme catalyses 3',3',3'-c-tri-AMP + H2O = A[3'-5']pA[3'-5']pAp[3'] + H(+). It carries out the reaction 3',3',3'-cAAG + H2O = G[3'-5']pA[3'-5']pAp[3'] + H(+). It catalyses the reaction 3',3',3'-cAAG + H2O = A[3'-5']pG[3'-5']pAp[3'] + H(+). The catalysed reaction is 3',3'-cGAMP + H2O = G[3'-5']pAp[3'] + H(+). Its function is as follows. Counteracts the host CBASS antiviral defense system. Phosphodiesterase that enables metal-independent hydrolysis of the host cyclic di- and trinucleotide CBASS signals such as 3'3'-cGAMP, 3'3'cUA, and 3'3'3'-cAAA. Does not cleave cGG or cA4. Besides evasion of the CBASS system, might also enable evasion of the type III CRISPR systems that use cA3 signals. The chain is Anti-CBASS protein Acb1 from Vibrio phage KVP40 (isolate Vibrio parahaemolyticus/Japan/Matsuzaki/1991) (KVP40).